Consider the following 324-residue polypeptide: 1-deoxyxylulose-5-phosphate synthase YajO (324 aa).

Tyr61 acts as the Proton donor in catalysis.

This sequence belongs to the aldo/keto reductase family. Aldo/keto reductase 2 subfamily.

The catalysed reaction is D-ribulose 5-phosphate + AH2 = 1-deoxy-D-xylulose 5-phosphate + A + H2O. With respect to regulation, NADH, NADPH or ATP do not increase activity. Functionally, catalyzes the conversion of ribulose 5-phosphate (Ru5P) to 1-deoxy-D-xylulose 5-phosphate (DXP), providing a direct route from pentoses to terpenes. May play a role in biosynthesis of DXP under conditions of thiamine starvation. The chain is 1-deoxyxylulose-5-phosphate synthase YajO (yajO) from Escherichia coli (strain K12).